A 361-amino-acid chain; its full sequence is Aromatic amino acid aminotransferase (361 aa).

N6-(pyridoxal phosphate)lysine is present on K221.

It belongs to the class-II pyridoxal-phosphate-dependent aminotransferase family. As to quaternary structure, homodimer. Pyridoxal 5'-phosphate serves as cofactor.

It catalyses the reaction an aromatic L-alpha-amino acid + 2-oxoglutarate = an aromatic oxo-acid + L-glutamate. Aminotransferase that catalyzes the conversion of aromatic amino acids and 2-oxoglutarate into corresponding aromatic oxo acids and L-glutamate. The chain is Aromatic amino acid aminotransferase from Mycobacterium marinum (strain ATCC BAA-535 / M).